A 333-amino-acid polypeptide reads, in one-letter code: Glyceraldehyde-3-phosphate dehydrogenase (333 aa).

N-acetylserine is present on S1. NAD(+) contacts are provided by residues 10–11, D31, and S118; that span reads RI. Residues 147–149, T178, 207–208, and R230 each bind D-glyceraldehyde 3-phosphate; these read SCT and TG. Residue C148 is the Nucleophile of the active site. N312 contributes to the NAD(+) binding site.

This sequence belongs to the glyceraldehyde-3-phosphate dehydrogenase family. In terms of assembly, homotetramer.

It localises to the cytoplasm. It carries out the reaction D-glyceraldehyde 3-phosphate + phosphate + NAD(+) = (2R)-3-phospho-glyceroyl phosphate + NADH + H(+). It participates in carbohydrate degradation; glycolysis; pyruvate from D-glyceraldehyde 3-phosphate: step 1/5. The chain is Glyceraldehyde-3-phosphate dehydrogenase from Homarus americanus (American lobster).